Consider the following 59-residue polypeptide: Preprotein translocase subunit SecG (59 aa).

The Cytoplasmic portion of the chain corresponds to 1–33 (MARRESSGGSGGLMSSAGLMRYFEAEESAIKID). The helical transmembrane segment at 34–55 (PKTVIIAAVASGAFIWILNFTY) threads the bilayer. The Extracellular portion of the chain corresponds to 56-59 (GRFW).

The protein belongs to the SEC61-beta family. In terms of assembly, component of the protein translocase complex. Heterotrimer consisting of alpha (SecY), beta (SecG) and gamma (SecE) subunits. Can form oligomers of the heterotrimer.

The protein localises to the cell membrane. Involved in protein export. The function of the beta subunit is unknown, but it may be involved in stabilization of the trimeric complex. The polypeptide is Preprotein translocase subunit SecG (Methanocella arvoryzae (strain DSM 22066 / NBRC 105507 / MRE50)).